Reading from the N-terminus, the 691-residue chain is Elongation factor G (691 aa).

The tr-type G domain maps to 8–282; that stretch reads EKTRNIGIMA…AVVDYLPSPV (275 aa). Residues 17–24, 81–85, and 135–138 contribute to the GTP site; these read AHIDAGKT, DTPGH, and NKMD.

The protein belongs to the TRAFAC class translation factor GTPase superfamily. Classic translation factor GTPase family. EF-G/EF-2 subfamily.

It is found in the cytoplasm. Functionally, catalyzes the GTP-dependent ribosomal translocation step during translation elongation. During this step, the ribosome changes from the pre-translocational (PRE) to the post-translocational (POST) state as the newly formed A-site-bound peptidyl-tRNA and P-site-bound deacylated tRNA move to the P and E sites, respectively. Catalyzes the coordinated movement of the two tRNA molecules, the mRNA and conformational changes in the ribosome. The chain is Elongation factor G from Caldicellulosiruptor bescii (strain ATCC BAA-1888 / DSM 6725 / KCTC 15123 / Z-1320) (Anaerocellum thermophilum).